A 130-amino-acid polypeptide reads, in one-letter code: KVFERCELARTLKRFGMDGFRGISLANWMCLARWESSYNTQATNYNSGDRSTDYGIFQINSHWWCNDGKTPGAVNACHIPCSALLQDDITQAVACAKRVVSDPQGIRAWVAWRSHCQNQDLTSYIQGCGV.

Residues lysine 1–valine 130 enclose the C-type lysozyme domain. 4 disulfides stabilise this stretch: cysteine 6-cysteine 128, cysteine 30-cysteine 116, cysteine 65-cysteine 81, and cysteine 77-cysteine 95. Active-site residues include glutamate 35 and aspartate 53.

Belongs to the glycosyl hydrolase 22 family. As to quaternary structure, monomer.

The protein localises to the secreted. It carries out the reaction Hydrolysis of (1-&gt;4)-beta-linkages between N-acetylmuramic acid and N-acetyl-D-glucosamine residues in a peptidoglycan and between N-acetyl-D-glucosamine residues in chitodextrins.. In terms of biological role, lysozymes have primarily a bacteriolytic function; those in tissues and body fluids are associated with the monocyte-macrophage system and enhance the activity of immunoagents. The sequence is that of Lysozyme C, kidney isozyme from Ovis aries (Sheep).